A 365-amino-acid polypeptide reads, in one-letter code: UDP-N-acetylglucosamine--N-acetylmuramyl-(pentapeptide) pyrophosphoryl-undecaprenol N-acetylglucosamine transferase (365 aa).

UDP-N-acetyl-alpha-D-glucosamine is bound by residues 17–19 (TGG), Asn-129, Arg-167, Ser-194, Ile-250, 269–274 (ALTVSE), and Gln-295.

The protein belongs to the glycosyltransferase 28 family. MurG subfamily.

The protein resides in the cell inner membrane. It carries out the reaction di-trans,octa-cis-undecaprenyl diphospho-N-acetyl-alpha-D-muramoyl-L-alanyl-D-glutamyl-meso-2,6-diaminopimeloyl-D-alanyl-D-alanine + UDP-N-acetyl-alpha-D-glucosamine = di-trans,octa-cis-undecaprenyl diphospho-[N-acetyl-alpha-D-glucosaminyl-(1-&gt;4)]-N-acetyl-alpha-D-muramoyl-L-alanyl-D-glutamyl-meso-2,6-diaminopimeloyl-D-alanyl-D-alanine + UDP + H(+). The protein operates within cell wall biogenesis; peptidoglycan biosynthesis. Its function is as follows. Cell wall formation. Catalyzes the transfer of a GlcNAc subunit on undecaprenyl-pyrophosphoryl-MurNAc-pentapeptide (lipid intermediate I) to form undecaprenyl-pyrophosphoryl-MurNAc-(pentapeptide)GlcNAc (lipid intermediate II). This is UDP-N-acetylglucosamine--N-acetylmuramyl-(pentapeptide) pyrophosphoryl-undecaprenol N-acetylglucosamine transferase from Shewanella pealeana (strain ATCC 700345 / ANG-SQ1).